The following is a 207-amino-acid chain: 8-oxoguanine DNA glycosylase/AP lyase (207 aa).

Active-site residues include Lys-128 and Asp-146.

The protein belongs to the type-2 OGG1 family.

The catalysed reaction is 2'-deoxyribonucleotide-(2'-deoxyribose 5'-phosphate)-2'-deoxyribonucleotide-DNA = a 3'-end 2'-deoxyribonucleotide-(2,3-dehydro-2,3-deoxyribose 5'-phosphate)-DNA + a 5'-end 5'-phospho-2'-deoxyribonucleoside-DNA + H(+). Its function is as follows. Catalyzes the excision of an oxidatively damaged form of guanine (7,8-dihydro-8-oxoguanine = 8-oxoG) from DNA. Also cleaves the DNA backbone at apurinic/apyrimidinic sites (AP sites). The protein is 8-oxoguanine DNA glycosylase/AP lyase of Saccharolobus solfataricus (strain ATCC 35092 / DSM 1617 / JCM 11322 / P2) (Sulfolobus solfataricus).